Reading from the N-terminus, the 363-residue chain is 3-isopropylmalate dehydrogenase (363 aa).

78-91 is a binding site for NAD(+); it reads GKKWDYLPIESRPE. Substrate is bound by residues Arg-99, Arg-109, Arg-138, and Asp-227. Mg(2+) contacts are provided by Asp-227, Asp-251, and Asp-255. An NAD(+)-binding site is contributed by 285-297; the sequence is GSAPDIEGKNIAN.

Belongs to the isocitrate and isopropylmalate dehydrogenases family. LeuB type 1 subfamily. As to quaternary structure, homodimer. It depends on Mg(2+) as a cofactor. Requires Mn(2+) as cofactor.

It is found in the cytoplasm. It carries out the reaction (2R,3S)-3-isopropylmalate + NAD(+) = 4-methyl-2-oxopentanoate + CO2 + NADH. The protein operates within amino-acid biosynthesis; L-leucine biosynthesis; L-leucine from 3-methyl-2-oxobutanoate: step 3/4. Its function is as follows. Catalyzes the oxidation of 3-carboxy-2-hydroxy-4-methylpentanoate (3-isopropylmalate) to 3-carboxy-4-methyl-2-oxopentanoate. The product decarboxylates to 4-methyl-2 oxopentanoate. The sequence is that of 3-isopropylmalate dehydrogenase (leuB) from Buchnera aphidicola subsp. Rhopalosiphum padi.